Here is a 113-residue protein sequence, read N- to C-terminus: Protein Rev (113 aa).

A homomultimerization region spans residues 15 to 23; it reads LIKFLYQSN. The disordered stretch occupies residues 17 to 45; that stretch reads KFLYQSNPPPSPEGTRQARRNRRRRWRQR. Positions 31–47 match the Nuclear localization signal and RNA-binding (RRE) motif; the sequence is TRQARRNRRRRWRQRQR. Residues 33–45 are compositionally biased toward basic residues; the sequence is QARRNRRRRWRQR. The short motif at 70–81 is the Nuclear export signal and binding to XPO1 element; it reads LQLPPLERLTLD. Phosphoserine; by host occurs at positions 89 and 96. The segment at 89–113 is disordered; it reads SGTQGVGSPQILVESPTILESGTKE.

It belongs to the HIV-1 REV protein family. In terms of assembly, homomultimer; when bound to the RRE. Multimeric assembly is essential for activity and may involve XPO1. Binds to human KPNB1, XPO1, TNPO1, RANBP5 and IPO7. Interacts with the viral Integrase. Interacts with human KHDRBS1. Interacts with human NAP1; this interaction decreases Rev multimerization and stimulates its activity. Interacts with human DEAD-box helicases DDX3 and DDX24; these interactions may serve for viral RNA export to the cytoplasm and packaging, respectively. Interacts with human PSIP1; this interaction may inhibit HIV-1 DNA integration by promoting dissociation of the Integrase-LEDGF/p75 complex. In terms of processing, asymmetrically arginine dimethylated at one site by host PRMT6. Methylation impairs the RNA-binding activity and export of viral RNA from the nucleus to the cytoplasm. Post-translationally, phosphorylated by protein kinase CK2. Presence of, and maybe binding to the N-terminus of the regulatory beta subunit of CK2 is necessary for CK2-mediated Rev's phosphorylation.

The protein resides in the host nucleus. It localises to the host nucleolus. It is found in the host cytoplasm. Functionally, escorts unspliced or incompletely spliced viral pre-mRNAs (late transcripts) out of the nucleus of infected cells. These pre-mRNAs carry a recognition sequence called Rev responsive element (RRE) located in the env gene, that is not present in fully spliced viral mRNAs (early transcripts). This function is essential since most viral proteins are translated from unspliced or partially spliced pre-mRNAs which cannot exit the nucleus by the pathway used by fully processed cellular mRNAs. Rev itself is translated from a fully spliced mRNA that readily exits the nucleus. Rev's nuclear localization signal (NLS) binds directly to KPNB1/Importin beta-1 without previous binding to KPNA1/Importin alpha-1. KPNB1 binds to the GDP bound form of RAN (Ran-GDP) and targets Rev to the nucleus. In the nucleus, the conversion from Ran-GDP to Ran-GTP dissociates Rev from KPNB1 and allows Rev's binding to the RRE in viral pre-mRNAs. Rev multimerization on the RRE via cooperative assembly exposes its nuclear export signal (NES) to the surface. Rev can then form a complex with XPO1/CRM1 and Ran-GTP, leading to nuclear export of the complex. Conversion from Ran-GTP to Ran-GDP mediates dissociation of the Rev/RRE/XPO1/RAN complex, so that Rev can return to the nucleus for a subsequent round of export. Beside KPNB1, also seems to interact with TNPO1/Transportin-1, RANBP5/IPO5 and IPO7/RANBP7 for nuclear import. The nucleoporin-like HRB/RIP is an essential cofactor that probably indirectly interacts with Rev to release HIV RNAs from the perinuclear region to the cytoplasm. This is Protein Rev from Human immunodeficiency virus type 1 group M subtype B (isolate JH32) (HIV-1).